The sequence spans 117 residues: B-enzyme (117 aa).

Residue Asp89 is part of the active site.

The catalysed reaction is Hydrolysis of (1-&gt;4)-beta-linkages between N-acetylmuramic acid and N-acetyl-D-glucosamine residues in a peptidoglycan and between N-acetyl-D-glucosamine residues in chitodextrins.. This is B-enzyme (lyzB) from Bacillus subtilis.